The sequence spans 20 residues: Alpha-basrubrin (20 aa).

Over residues 1–13 (GADFQECMKEHSQ) the composition is skewed to basic and acidic residues. A disordered region spans residues 1 to 20 (GADFQECMKEHSQKQHQHQG).

Functionally, possesses antifungal activity against B.cinerea, M.arachidicola and F.oxysporum but not C.comatus and R.solani. Inhibits HIV-1 reverse transcriptase and cell-free translation. The polypeptide is Alpha-basrubrin (Basella alba (Malabar spinach)).